Here is a 185-residue protein sequence, read N- to C-terminus: uncharacterized protein (185 aa).

A run of 3 helical transmembrane segments spans residues 32-52 (LIFV…LLAF), 66-86 (LVTL…VLAV), and 155-175 (IGYG…FLVV).

The protein localises to the cell membrane. This is an uncharacterized protein from Bacillus subtilis (strain 168).